The primary structure comprises 172 residues: Protein GrpE (172 aa).

It belongs to the GrpE family. In terms of assembly, homodimer.

The protein resides in the cytoplasm. Its function is as follows. Participates actively in the response to hyperosmotic and heat shock by preventing the aggregation of stress-denatured proteins, in association with DnaK and GrpE. It is the nucleotide exchange factor for DnaK and may function as a thermosensor. Unfolded proteins bind initially to DnaJ; upon interaction with the DnaJ-bound protein, DnaK hydrolyzes its bound ATP, resulting in the formation of a stable complex. GrpE releases ADP from DnaK; ATP binding to DnaK triggers the release of the substrate protein, thus completing the reaction cycle. Several rounds of ATP-dependent interactions between DnaJ, DnaK and GrpE are required for fully efficient folding. The chain is Protein GrpE from Thermotoga petrophila (strain ATCC BAA-488 / DSM 13995 / JCM 10881 / RKU-1).